The following is an 83-amino-acid chain: Cytochrome b559 subunit alpha (83 aa).

The helical transmembrane segment at 21-35 (VIHSITIPSLFIAGW) threads the bilayer. A heme-binding site is contributed by His23.

The protein belongs to the PsbE/PsbF family. Heterodimer of an alpha subunit and a beta subunit. PSII is composed of 1 copy each of membrane proteins PsbA, PsbB, PsbC, PsbD, PsbE, PsbF, PsbH, PsbI, PsbJ, PsbK, PsbL, PsbM, PsbT, PsbX, PsbY, PsbZ, Psb30/Ycf12, at least 3 peripheral proteins of the oxygen-evolving complex and a large number of cofactors. It forms dimeric complexes. It depends on heme b as a cofactor.

The protein localises to the plastid. The protein resides in the chloroplast thylakoid membrane. Functionally, this b-type cytochrome is tightly associated with the reaction center of photosystem II (PSII). PSII is a light-driven water:plastoquinone oxidoreductase that uses light energy to abstract electrons from H(2)O, generating O(2) and a proton gradient subsequently used for ATP formation. It consists of a core antenna complex that captures photons, and an electron transfer chain that converts photonic excitation into a charge separation. This chain is Cytochrome b559 subunit alpha, found in Mesembryanthemum crystallinum (Common ice plant).